A 185-amino-acid chain; its full sequence is Alpha-S1-casein (185 aa).

A signal peptide spans 1–15 (MRLLILTCLVAVALA). Phosphoserine is present on residues serine 31, serine 33, serine 41, serine 71, serine 85, serine 86, serine 88, serine 89, serine 90, and serine 91.

It belongs to the alpha-casein family. Heteromultimers of alpha-s1 casein and kappa-casein; disulfide-linked. In terms of processing, not glycosylated. Mammary gland specific. Secreted in milk.

The protein localises to the secreted. Its function is as follows. Important role in the capacity of milk to transport calcium phosphate. In terms of biological role, casoxin D acts as opioid antagonist and has vasorelaxing activity mediated by bradykinin B1 receptors. This is Alpha-S1-casein (CSN1S1) from Homo sapiens (Human).